Consider the following 808-residue polypeptide: Putative minor structural protein VP5 (808 aa).

Its subcellular location is the virion. In Rice ragged stunt virus (isolate Thailand) (RRSV), this protein is Putative minor structural protein VP5.